Reading from the N-terminus, the 225-residue chain is Cell division protein SepF (225 aa).

A disordered region spans residues 21–134 (DEYLDEPEPT…GPLFDEGGPL (114 aa)). Basic and acidic residues-rich tracts occupy residues 28–54 (EPTRRPARPARDSGRDPYHDRDDRDFA), 77–86 (RYESPRHSSR), and 115–127 (TRSDRVESRRGPL).

It belongs to the SepF family. As to quaternary structure, homodimer. Interacts with FtsZ.

It localises to the cytoplasm. Cell division protein that is part of the divisome complex and is recruited early to the Z-ring. Probably stimulates Z-ring formation, perhaps through the cross-linking of FtsZ protofilaments. Its function overlaps with FtsA. The protein is Cell division protein SepF of Rhodococcus opacus (strain B4).